We begin with the raw amino-acid sequence, 737 residues long: Zinc finger protein 280C (737 aa).

Glycyl lysine isopeptide (Lys-Gly) (interchain with G-Cter in SUMO2) cross-links involve residues K5, K10, K14, K33, and K55. Residues 57–66 (AISNILNRGH) show a composition bias toward polar residues. Residues 57 to 137 (AISNILNRGH…DFTKNSQVGS (81 aa)) form a disordered region. Residue K75 forms a Glycyl lysine isopeptide (Lys-Gly) (interchain with G-Cter in SUMO2) linkage. S80 carries the phosphoserine modification. A compositionally biased stretch (polar residues) spans 112 to 123 (SKSSQSSVTVEN). Glycyl lysine isopeptide (Lys-Gly) (interchain with G-Cter in SUMO2) cross-links involve residues K113, K126, K167, K174, K180, and K187. Positions 176-185 (PSTSKVNSVT) are enriched in polar residues. The interval 176–223 (PSTSKVNSVTPKKPKTSEDVPQINPSTSLPLIGSPPVTSSQVMLSKGT) is disordered. The segment covering 211 to 223 (PVTSSQVMLSKGT) has biased composition (polar residues). Residue T223 is modified to Phosphothreonine. S227 bears the Phosphoserine mark. K273 participates in a covalent cross-link: Glycyl lysine isopeptide (Lys-Gly) (interchain with G-Cter in SUMO2). 5 C2H2-type zinc fingers span residues 316–338 (FKCF…MKHH), 353–376 (TTCQ…ESTH), 383–406 (TICK…KDTH), 413–436 (YVCQ…RAAH), and 470–492 (HRCP…KAQH). K522 participates in a covalent cross-link: Glycyl lysine isopeptide (Lys-Gly) (interchain with G-Cter in SUMO2). The span at 535–579 (SFLQVTPPTSQNTTARNPRKSNASRSKTSKLHATTSTASKVNTSK) shows a compositional bias: polar residues. Residues 535-602 (SFLQVTPPTS…YKQKRQRNRK (68 aa)) are disordered. The residue at position 540 (T540) is a Phosphothreonine. Glycyl lysine isopeptide (Lys-Gly) (interchain with G-Cter in SUMO2) cross-links involve residues K564 and K574. Over residues 580-602 (PRGRIAKSKAKPSYKQKRQRNRK) the composition is skewed to basic residues.

The protein resides in the nucleus. In terms of biological role, may function as a transcription factor. The protein is Zinc finger protein 280C (ZNF280C) of Homo sapiens (Human).